The sequence spans 196 residues: Gastrula zinc finger protein XlCGF8.2DB (196 aa).

C2H2-type zinc fingers lie at residues F6–H28, F34–H56, F62–H84, F90–H112, F118–H140, F146–H168, and F174–H196.

This sequence belongs to the krueppel C2H2-type zinc-finger protein family.

The protein localises to the nucleus. Its function is as follows. May be involved in transcriptional regulation. The chain is Gastrula zinc finger protein XlCGF8.2DB from Xenopus laevis (African clawed frog).